A 419-amino-acid chain; its full sequence is Serine--tRNA ligase (419 aa).

A disordered region spans residues 45 to 66; that stretch reads ADSLRAEQKAASKSVGGASPEE. 226 to 228 is an L-serine binding site; the sequence is TSE. ATP-binding positions include 257-259 and Val273; that span reads RRE. Residue Glu280 coordinates L-serine. Position 344-347 (344-347) interacts with ATP; sequence ELTS. An L-serine-binding site is contributed by Thr379.

It belongs to the class-II aminoacyl-tRNA synthetase family. Type-1 seryl-tRNA synthetase subfamily. In terms of assembly, homodimer. The tRNA molecule binds across the dimer.

Its subcellular location is the cytoplasm. The enzyme catalyses tRNA(Ser) + L-serine + ATP = L-seryl-tRNA(Ser) + AMP + diphosphate + H(+). It carries out the reaction tRNA(Sec) + L-serine + ATP = L-seryl-tRNA(Sec) + AMP + diphosphate + H(+). It functions in the pathway aminoacyl-tRNA biosynthesis; selenocysteinyl-tRNA(Sec) biosynthesis; L-seryl-tRNA(Sec) from L-serine and tRNA(Sec): step 1/1. Its function is as follows. Catalyzes the attachment of serine to tRNA(Ser). Is also able to aminoacylate tRNA(Sec) with serine, to form the misacylated tRNA L-seryl-tRNA(Sec), which will be further converted into selenocysteinyl-tRNA(Sec). The protein is Serine--tRNA ligase of Mycobacterium ulcerans (strain Agy99).